Reading from the N-terminus, the 404-residue chain is Queuine tRNA-ribosyltransferase catalytic subunit (404 aa).

The Proton acceptor role is filled by D98. Substrate is bound by residues 98-102 (DSGGF), D152, Q195, and G222. The interval 253–259 (GVGYAED) is RNA binding. The Nucleophile role is filled by D272. An RNA binding; important for wobble base 34 recognition region spans residues 277-281 (TRTAR). Zn(2+) is bound by residues C310, C312, C315, and H347.

The protein belongs to the queuine tRNA-ribosyltransferase family. In terms of assembly, heterodimer of a catalytic subunit and an accessory subunit. Zn(2+) serves as cofactor.

Its subcellular location is the cytoplasm. It localises to the nucleus. It carries out the reaction guanosine(34) in tRNA + queuine = queuosine(34) in tRNA + guanine. In terms of biological role, catalytic subunit of the queuine tRNA-ribosyltransferase (TGT) that catalyzes the base-exchange of a guanine (G) residue with queuine (Q) at position 34 (anticodon wobble position) in tRNAs with GU(N) anticodons (tRNA-Asp, -Asn, -His and -Tyr), resulting in the hypermodified nucleoside queuosine (7-(((4,5-cis-dihydroxy-2-cyclopenten-1-yl)amino)methyl)-7-deazaguanosine). Catalysis occurs through a double-displacement mechanism. The nucleophile active site attacks the C1' of nucleotide 34 to detach the guanine base from the RNA, forming a covalent enzyme-RNA intermediate. The proton acceptor active site deprotonates the incoming queuine, allowing a nucleophilic attack on the C1' of the ribose to form the product. The sequence is that of Queuine tRNA-ribosyltransferase catalytic subunit from Schizosaccharomyces pombe (strain 972 / ATCC 24843) (Fission yeast).